Here is a 464-residue protein sequence, read N- to C-terminus: Protein ABHD18 (464 aa).

A signal peptide spans 1–24 (MGVSKLDILYRRLLLTKLFIRGWG). An N-linked (GlcNAc...) asparagine glycan is attached at Asn341.

Belongs to the AB hydrolase superfamily.

The protein resides in the secreted. This is Protein ABHD18 from Rattus norvegicus (Rat).